The chain runs to 775 residues: Putative late blight resistance protein homolog R1A-3 (775 aa).

Residues 16-39 adopt a coiled-coil conformation; it reads PRMNEEIVGFEDVIENLRKKLLSE. The region spanning 17 to 237 is the NB-ARC domain; sequence RMNEEIVGFE…LSEMEKEVEC (221 aa). Residue 50–57 participates in ATP binding; it reads GMPGLGKT. Positions 711 to 775 constitute an HMA domain; it reads IKKMILQFDI…VGKLIDSGML (65 aa).

Belongs to the disease resistance NB-LRR family.

It is found in the cytoplasm. The protein localises to the membrane. Confers resistance to late blight (Phytophthora infestans) races carrying the avirulence gene Avr1. Resistance proteins guard the plant against pathogens that contain an appropriate avirulence protein via an indirect interaction with this avirulence protein. That triggers a defense system including the hypersensitive response, which restricts the pathogen growth. The polypeptide is Putative late blight resistance protein homolog R1A-3 (R1A-3) (Solanum demissum (Wild potato)).